The following is a 263-amino-acid chain: Formamidopyrimidine-DNA glycosylase (263 aa).

P2 functions as the Schiff-base intermediate with DNA in the catalytic mechanism. E3 (proton donor) is an active-site residue. K59 acts as the Proton donor; for beta-elimination activity in catalysis. Residues H93 and R111 each contribute to the DNA site. The segment at 229 to 263 (KVYGKNGSLCVRCNNVLIRERHAGRSTHYCPHCQK) adopts an FPG-type zinc-finger fold. Residue R253 is the Proton donor; for delta-elimination activity of the active site.

This sequence belongs to the FPG family. As to quaternary structure, monomer. It depends on Zn(2+) as a cofactor.

The catalysed reaction is Hydrolysis of DNA containing ring-opened 7-methylguanine residues, releasing 2,6-diamino-4-hydroxy-5-(N-methyl)formamidopyrimidine.. The enzyme catalyses 2'-deoxyribonucleotide-(2'-deoxyribose 5'-phosphate)-2'-deoxyribonucleotide-DNA = a 3'-end 2'-deoxyribonucleotide-(2,3-dehydro-2,3-deoxyribose 5'-phosphate)-DNA + a 5'-end 5'-phospho-2'-deoxyribonucleoside-DNA + H(+). Functionally, involved in base excision repair of DNA damaged by oxidation or by mutagenic agents. Acts as a DNA glycosylase that recognizes and removes damaged bases. Has a preference for oxidized purines, such as 7,8-dihydro-8-oxoguanine (8-oxoG). Has AP (apurinic/apyrimidinic) lyase activity and introduces nicks in the DNA strand. Cleaves the DNA backbone by beta-delta elimination to generate a single-strand break at the site of the removed base with both 3'- and 5'-phosphates. This is Formamidopyrimidine-DNA glycosylase from Carboxydothermus hydrogenoformans (strain ATCC BAA-161 / DSM 6008 / Z-2901).